The following is an 803-amino-acid chain: Homeobox protein Wariai (803 aa).

Residues 23–41 (SDYDSYEQQYNNPTGSKQY) show a composition bias toward polar residues. The interval 23 to 144 (SDYDSYEQQY…PTPYSSNSFS (122 aa)) is disordered. Positions 42 to 124 (NNNNNNNTNT…NNNNNNNNNN (83 aa)) are enriched in low complexity. A compositionally biased stretch (polar residues) spans 125–138 (QHLSQSQQLSPTPY). The homeobox DNA-binding region spans 162–221 (SKKKRKRTSPDQLKLLEKIFMAHQHPNLNLRSQLAVELHMTARSVQIWFQNRRAKARNME). The disordered stretch occupies residues 288-330 (INGNMGGGGGGGGGSHNHHHHNHNHNHHNHNHNHNHNQPLSNG). Over residues 291–302 (NMGGGGGGGGGS) the composition is skewed to gly residues. Positions 303-322 (HNHHHHNHNHNHHNHNHNHN) are enriched in basic residues. 9 ANK repeats span residues 374–403 (KGLS…NPNI), 407–436 (QGNT…DPNL), 440–469 (EGVS…EVSV), 474–503 (NGET…KASV), 507–536 (NNRT…DMNA), 540–569 (DGHT…DPNI), 573–602 (EGYT…KLNI), 606–636 (NGQN…EIAA), and 642–671 (QGYT…SKKI). A disordered region spans residues 695 to 760 (KSSNNNNSNS…PPGNKFEEDD (66 aa)). Residues 696–746 (SSNNNNSNSNINNINNINNINNINSQPNTNSDNNNNNNNNNFNENYSNGNN) show a composition bias toward low complexity.

The protein resides in the nucleus. Its function is as follows. Putative transcription factor, that seems to be involved in anterior-posterior patterning of the slug, probably by controlling the proportions of prestalk and prespore cells. The protein is Homeobox protein Wariai (warA) of Dictyostelium discoideum (Social amoeba).